Here is a 265-residue protein sequence, read N- to C-terminus: Indole-3-glycerol phosphate synthase (265 aa).

It belongs to the TrpC family.

It catalyses the reaction 1-(2-carboxyphenylamino)-1-deoxy-D-ribulose 5-phosphate + H(+) = (1S,2R)-1-C-(indol-3-yl)glycerol 3-phosphate + CO2 + H2O. It participates in amino-acid biosynthesis; L-tryptophan biosynthesis; L-tryptophan from chorismate: step 4/5. The protein is Indole-3-glycerol phosphate synthase of Xanthomonas oryzae pv. oryzae (strain MAFF 311018).